Consider the following 264-residue polypeptide: Apolipoprotein A-I (264 aa).

Positions 1-18 (MKAVLLVVAALFLAGSQA) are cleaved as a signal peptide. A run of 2 repeats spans residues 67–88 (LRLS…ADFG) and 89–110 (LATQ…QIVS). Residues 67–264 (LRLSDNWDTL…DQASKQLAAQ (198 aa)) form a 10 X approximate tandem repeats region. The stretch at 111-121 (EDLQDVKHKVQ) is one 3; half-length repeat. Repeat copies occupy residues 122 to 143 (PYLE…EKVR), 144 to 165 (PLGI…EKLT), and 166 to 187 (PLGE…TQLA). Residues 188 to 207 (PFSEEMRQRLAKRLEELKDS) form a 7; truncated repeat. Residue M193 is modified to Methionine sulfoxide. The stretch at 208 to 229 (ATLADYHAKASEHLKMLGEKAK) is repeat 8. The 9; half-length repeat unit spans residues 230–240 (PALEDLRQGLL). The stretch at 241-264 (PVLENLKASILSSIDQASKQLAAQ) is repeat 10.

This sequence belongs to the apolipoprotein A1/A4/E family. In terms of assembly, homodimer. Interacts with APOA1BP and CLU. Component of a sperm activating protein complex (SPAP), consisting of APOA1, an immunoglobulin heavy chain, an immunoglobulin light chain and albumin. Interacts with NDRG1. Interacts with SCGB3A2. Interacts with NAXE and YJEFN3. Glycosylated. Post-translationally, palmitoylated. In terms of processing, phosphorylation sites are present in the extracellular medium.

The protein localises to the secreted. Its function is as follows. Participates in the reverse transport of cholesterol from tissues to the liver for excretion by promoting cholesterol efflux from tissues and by acting as a cofactor for the lecithin cholesterol acyltransferase (LCAT). As part of the SPAP complex, activates spermatozoa motility. The chain is Apolipoprotein A-I (APOA1) from Cavia aperea (Brazilian guinea pig).